The sequence spans 130 residues: Small ribosomal subunit protein uS8 (130 aa).

Belongs to the universal ribosomal protein uS8 family. As to quaternary structure, part of the 30S ribosomal subunit.

In terms of biological role, one of the primary rRNA binding proteins, it binds directly to 16S rRNA central domain where it helps coordinate assembly of the platform of the 30S subunit. The protein is Small ribosomal subunit protein uS8 of Methanosarcina barkeri (strain Fusaro / DSM 804).